The primary structure comprises 231 residues: Class II histocompatibility antigen, B-L beta chain (231 aa).

A beta-1 region spans residues 1–89 (FFQWSATVEC…IVAPLTLQRR (89 aa)). Topologically, residues 1–194 (FFQWSATVEC…PGDVSRSKLL (194 aa)) are extracellular. Cystine bridges form between Cys10–Cys74 and Cys111–Cys167. A glycan (N-linked (GlcNAc...) asparagine) is linked at Asn14. The tract at residues 90–182 (EPKVRIFALQ…SLQQPITQRW (93 aa)) is beta-2. The Ig-like C1-type domain maps to 91-179 (PKVRIFALQS…EHTSLQQPIT (89 aa)). The tract at residues 183-194 (EPPGDVSRSKLL) is connecting peptide. The helical transmembrane segment at 195 to 219 (MGVGGFVLGLVYLALGIFFFLCSKK) threads the bilayer. Topologically, residues 220–231 (GQPDPTSPGILN) are cytoplasmic.

This sequence belongs to the MHC class II family.

It localises to the membrane. This chain is Class II histocompatibility antigen, B-L beta chain, found in Gallus gallus (Chicken).